The sequence spans 790 residues: Phenylalanine--tRNA ligase beta subunit (790 aa).

The region spanning 39-147 is the tRNA-binding domain; sequence AKPFSGIVVG…ADAPVGVDVR (109 aa). The region spanning 400–476 is the B5 domain; that stretch reads PAKALVNLRH…RLYGYNKLPV (77 aa). Residues aspartate 454, aspartate 460, glutamate 463, and glutamate 464 each coordinate Mg(2+). An FDX-ACB domain is found at 696 to 789; sequence SRFPEIRRDL…LGNRFGASLR (94 aa).

This sequence belongs to the phenylalanyl-tRNA synthetase beta subunit family. Type 1 subfamily. Tetramer of two alpha and two beta subunits. The cofactor is Mg(2+).

It localises to the cytoplasm. It carries out the reaction tRNA(Phe) + L-phenylalanine + ATP = L-phenylalanyl-tRNA(Phe) + AMP + diphosphate + H(+). The sequence is that of Phenylalanine--tRNA ligase beta subunit from Hahella chejuensis (strain KCTC 2396).